An 84-amino-acid polypeptide reads, in one-letter code: Anaphase-promoting complex subunit 11 (84 aa).

12 residues coordinate Zn(2+): Cys-23, Cys-26, Cys-34, Cys-37, Cys-44, Cys-51, His-53, His-56, His-58, Cys-59, Cys-73, and Cys-76. The RING-type zinc-finger motif lies at 34–77; sequence CPDCKVPGDDCPLVWGQCSHCFHMHCILKWLNAQQVQQHCPMCR.

This sequence belongs to the RING-box family. The mammalian APC/C is composed at least of 14 distinct subunits ANAPC1, ANAPC2, CDC27/APC3, ANAPC4, ANAPC5, CDC16/APC6, ANAPC7, CDC23/APC8, ANAPC10, ANAPC11, CDC26/APC12, ANAPC13, ANAPC15 and ANAPC16 that assemble into a complex of at least 19 chains with a combined molecular mass of around 1.2 MDa; APC/C interacts with FZR1 and FBXO5. Interacts with the cullin domain of ANAPC2. Interacts with UBE2D2. In terms of processing, auto-ubiquitinated.

The protein resides in the cytoplasm. It localises to the nucleus. It participates in protein modification; protein ubiquitination. Its function is as follows. Together with the cullin protein ANAPC2, constitutes the catalytic component of the anaphase promoting complex/cyclosome (APC/C), a cell cycle-regulated E3 ubiquitin ligase that controls progression through mitosis and the G1 phase of the cell cycle. The APC/C complex acts by mediating ubiquitination and subsequent degradation of target proteins: it mainly mediates the formation of 'Lys-11'-linked polyubiquitin chains and, to a lower extent, the formation of 'Lys-48'- and 'Lys-63'-linked polyubiquitin chains. The APC/C complex catalyzes assembly of branched 'Lys-11'-/'Lys-48'-linked branched ubiquitin chains on target proteins. May recruit the E2 ubiquitin-conjugating enzymes to the complex. The polypeptide is Anaphase-promoting complex subunit 11 (ANAPC11) (Bos taurus (Bovine)).